We begin with the raw amino-acid sequence, 242 residues long: Small ribosomal subunit protein uS3 (242 aa).

Positions 39-110 (IRRFIHKKYG…QVRINVVEVE (72 aa)) constitute a KH type-2 domain. Residues 217–242 (TMPVGASPRRRGNRRPQQFEDRSNEG) are disordered. Residues 233 to 242 (QQFEDRSNEG) are compositionally biased toward basic and acidic residues.

The protein belongs to the universal ribosomal protein uS3 family. Part of the 30S ribosomal subunit. Forms a tight complex with proteins S10 and S14.

Functionally, binds the lower part of the 30S subunit head. Binds mRNA in the 70S ribosome, positioning it for translation. In Prochlorococcus marinus (strain MIT 9313), this protein is Small ribosomal subunit protein uS3.